A 140-amino-acid polypeptide reads, in one-letter code: Large ribosomal subunit protein uL11 (140 aa).

The protein belongs to the universal ribosomal protein uL11 family. Part of the ribosomal stalk of the 50S ribosomal subunit. Interacts with L10 and the large rRNA to form the base of the stalk. L10 forms an elongated spine to which L12 dimers bind in a sequential fashion forming a multimeric L10(L12)X complex. In terms of processing, one or more lysine residues are methylated.

Functionally, forms part of the ribosomal stalk which helps the ribosome interact with GTP-bound translation factors. This Enterococcus faecalis (strain ATCC 700802 / V583) protein is Large ribosomal subunit protein uL11.